The chain runs to 653 residues: Pentatricopeptide repeat-containing protein At3g14730 (653 aa).

14 PPR repeats span residues 59 to 93 (NVATCIATLQRCAQRKDYVSGQQIHGFMVRKGFLD), 95 to 119 (SPRAGTSLVNMYAKCGLMRRAVLVF), 125 to 159 (DVFGYNALISGFVVNGSPLDAMETYREMRANGILP), 160 to 193 (DKYTFPSLLKGSDAMELSDVKKVHGLAFKLGFDS), 194 to 224 (DCYVGSGLVTSYSKFMSVEDAQKVFDELPDR), 226 to 260 (DSVLWNALVNGYSQIFRFEDALLVFSKMREEGVGV), 261 to 295 (SRHTITSVLSAFTVSGDIDNGRSIHGLAVKTGSGS), 296 to 326 (DIVVSNALIDMYGKSKWLEEANSIFEAMDER), 327 to 361 (DLFTWNSVLCVHDYCGDHDGTLALFERMLCSGIRP), 362 to 396 (DIVTLTTVLPTCGRLASLRQGREIHGYMIVSGLLN), 401 to 431 (NEFIHNSLMDMYVKCGDLRDARMVFDSMRVK), 432 to 466 (DSASWNIMINGYGVQSCGELALDMFSCMCRAGVKP), 467 to 497 (DEITFVGLLQACSHSGFLNEGRNFLAQMETV), and 503 to 537 (TSDHYACVIDMLGRADKLEEAYELAISKPICDNPV). Residues 538 to 613 (VWRSILSSCR…TPGCSWIVLK (76 aa)) form a type E motif region. A type E(+) motif region spans residues 614–644 (NGVHTFFTGNQTHPEFKSIHDWLSLVISHMH).

The protein belongs to the PPR family. PCMP-E subfamily.

In Arabidopsis thaliana (Mouse-ear cress), this protein is Pentatricopeptide repeat-containing protein At3g14730 (PCMP-E31).